The following is a 149-amino-acid chain: 3-hydroxyacyl-[acyl-carrier-protein] dehydratase FabZ (149 aa).

Residue His52 is part of the active site.

The protein belongs to the thioester dehydratase family. FabZ subfamily.

Its subcellular location is the cytoplasm. The enzyme catalyses a (3R)-hydroxyacyl-[ACP] = a (2E)-enoyl-[ACP] + H2O. Functionally, involved in unsaturated fatty acids biosynthesis. Catalyzes the dehydration of short chain beta-hydroxyacyl-ACPs and long chain saturated and unsaturated beta-hydroxyacyl-ACPs. The sequence is that of 3-hydroxyacyl-[acyl-carrier-protein] dehydratase FabZ from Cupriavidus necator (strain ATCC 17699 / DSM 428 / KCTC 22496 / NCIMB 10442 / H16 / Stanier 337) (Ralstonia eutropha).